The following is a 285-amino-acid chain: Phosphatidylserine decarboxylase proenzyme (285 aa).

Catalysis depends on charge relay system; for autoendoproteolytic cleavage activity residues Asp89, His146, and Ser252. Ser252 serves as the catalytic Schiff-base intermediate with substrate; via pyruvic acid; for decarboxylase activity. Ser252 bears the Pyruvic acid (Ser); by autocatalysis mark.

The protein belongs to the phosphatidylserine decarboxylase family. PSD-B subfamily. Prokaryotic type I sub-subfamily. In terms of assembly, heterodimer of a large membrane-associated beta subunit and a small pyruvoyl-containing alpha subunit. Pyruvate serves as cofactor. Is synthesized initially as an inactive proenzyme. Formation of the active enzyme involves a self-maturation process in which the active site pyruvoyl group is generated from an internal serine residue via an autocatalytic post-translational modification. Two non-identical subunits are generated from the proenzyme in this reaction, and the pyruvate is formed at the N-terminus of the alpha chain, which is derived from the carboxyl end of the proenzyme. The autoendoproteolytic cleavage occurs by a canonical serine protease mechanism, in which the side chain hydroxyl group of the serine supplies its oxygen atom to form the C-terminus of the beta chain, while the remainder of the serine residue undergoes an oxidative deamination to produce ammonia and the pyruvoyl prosthetic group on the alpha chain. During this reaction, the Ser that is part of the protease active site of the proenzyme becomes the pyruvoyl prosthetic group, which constitutes an essential element of the active site of the mature decarboxylase.

It localises to the cell membrane. The enzyme catalyses a 1,2-diacyl-sn-glycero-3-phospho-L-serine + H(+) = a 1,2-diacyl-sn-glycero-3-phosphoethanolamine + CO2. It participates in phospholipid metabolism; phosphatidylethanolamine biosynthesis; phosphatidylethanolamine from CDP-diacylglycerol: step 2/2. Functionally, catalyzes the formation of phosphatidylethanolamine (PtdEtn) from phosphatidylserine (PtdSer). This Vibrio vulnificus (strain CMCP6) protein is Phosphatidylserine decarboxylase proenzyme.